A 258-amino-acid chain; its full sequence is UPF0246 protein YaaA (258 aa).

This sequence belongs to the UPF0246 family.

The polypeptide is UPF0246 protein YaaA (Escherichia coli O45:K1 (strain S88 / ExPEC)).